Here is a 429-residue protein sequence, read N- to C-terminus: Glucose-1-phosphate adenylyltransferase (429 aa).

Residues glycine 162, 177 to 178 (EK), and serine 209 contribute to the alpha-D-glucose 1-phosphate site.

The protein belongs to the bacterial/plant glucose-1-phosphate adenylyltransferase family. As to quaternary structure, homotetramer.

The catalysed reaction is alpha-D-glucose 1-phosphate + ATP + H(+) = ADP-alpha-D-glucose + diphosphate. Its pathway is glycan biosynthesis; glycogen biosynthesis. Its function is as follows. Involved in the biosynthesis of ADP-glucose, a building block required for the elongation reactions to produce glycogen. Catalyzes the reaction between ATP and alpha-D-glucose 1-phosphate (G1P) to produce pyrophosphate and ADP-Glc. The polypeptide is Glucose-1-phosphate adenylyltransferase (Gloeothece citriformis (strain PCC 7424) (Cyanothece sp. (strain PCC 7424))).